Consider the following 345-residue polypeptide: L-rhamnose-proton symporter (345 aa).

Transmembrane regions (helical) follow at residues 4 to 24, 38 to 58, 68 to 88, 101 to 121, 131 to 151, 175 to 195, 214 to 234, 259 to 279, 290 to 310, and 323 to 343; these read AITM…CFYA, WSVG…ALLL, FSAA…IGNI, MGIG…TPLL, TAGG…VAIV, LVLA…MDAA, LPSY…FCFI, VLLS…YAWG, ISWM…GLLL, and VLSL…LGMA.

This sequence belongs to the L-rhamnose transporter (TC 2.A.7.6) family.

The protein resides in the cell inner membrane. It catalyses the reaction L-rhamnopyranose(in) + H(+)(in) = L-rhamnopyranose(out) + H(+)(out). In terms of biological role, uptake of L-rhamnose across the cytoplasmic membrane with the concomitant transport of protons into the cell (symport system). This is L-rhamnose-proton symporter from Cronobacter sakazakii (strain ATCC BAA-894) (Enterobacter sakazakii).